A 358-amino-acid polypeptide reads, in one-letter code: Phosphoserine aminotransferase (358 aa).

Arg41 serves as a coordination point for L-glutamate. Residues 75–76, Trp100, Thr148, Asp167, and Gln190 each bind pyridoxal 5'-phosphate; that span reads AS. Lys191 carries the N6-(pyridoxal phosphate)lysine modification. 233-234 contacts pyridoxal 5'-phosphate; that stretch reads NT.

The protein belongs to the class-V pyridoxal-phosphate-dependent aminotransferase family. SerC subfamily. Homodimer. Requires pyridoxal 5'-phosphate as cofactor.

It is found in the cytoplasm. The catalysed reaction is O-phospho-L-serine + 2-oxoglutarate = 3-phosphooxypyruvate + L-glutamate. It carries out the reaction 4-(phosphooxy)-L-threonine + 2-oxoglutarate = (R)-3-hydroxy-2-oxo-4-phosphooxybutanoate + L-glutamate. It participates in amino-acid biosynthesis; L-serine biosynthesis; L-serine from 3-phospho-D-glycerate: step 2/3. Its pathway is cofactor biosynthesis; pyridoxine 5'-phosphate biosynthesis; pyridoxine 5'-phosphate from D-erythrose 4-phosphate: step 3/5. Its function is as follows. Catalyzes the reversible conversion of 3-phosphohydroxypyruvate to phosphoserine and of 3-hydroxy-2-oxo-4-phosphonooxybutanoate to phosphohydroxythreonine. The protein is Phosphoserine aminotransferase of Campylobacter jejuni subsp. jejuni serotype O:23/36 (strain 81-176).